The sequence spans 469 residues: D-3-phosphoglycerate dehydrogenase 2 (469 aa).

N-acetylserine is present on Ser-2. Ser-22, Ser-29, and Ser-33 each carry phosphoserine. NAD(+)-binding positions include 208 to 209 (HI), Asp-228, 285 to 287 (ASR), and Asp-311. Residue Arg-287 is part of the active site. Glu-316 is a catalytic residue. The Proton donor role is filled by His-347. 347 to 350 (HIGG) contacts NAD(+). Residues 399-469 (RVLYIHRNVP…SAKVSIRLLY (71 aa)) enclose the ACT domain.

The protein belongs to the D-isomer specific 2-hydroxyacid dehydrogenase family.

The enzyme catalyses (2R)-3-phosphoglycerate + NAD(+) = 3-phosphooxypyruvate + NADH + H(+). It catalyses the reaction (R)-2-hydroxyglutarate + NAD(+) = 2-oxoglutarate + NADH + H(+). It participates in amino-acid biosynthesis; L-serine biosynthesis; L-serine from 3-phospho-D-glycerate: step 1/3. Functionally, catalyzes the reversible oxidation of 3-phospho-D-glycerate to 3-phosphonooxypyruvate, the first step of the phosphorylated L-serine biosynthesis pathway. Also catalyzes the reversible oxidation of 2-hydroxyglutarate to 2-oxoglutarate. The sequence is that of D-3-phosphoglycerate dehydrogenase 2 (SER33) from Saccharomyces cerevisiae (strain ATCC 204508 / S288c) (Baker's yeast).